A 68-amino-acid polypeptide reads, in one-letter code: Beta-defensin 1 (68 aa).

The N-terminal stretch at 1 to 21 is a signal peptide; it reads MRTSYLLLFTLCLLLSEMASG. A propeptide spanning residues 22-32 is cleaved from the precursor; the sequence is GNFLTGLGHRS. 3 cysteine pairs are disulfide-bonded: C37–C66, C44–C59, and C49–C67.

This sequence belongs to the beta-defensin family. Monomer. Homodimer.

It localises to the secreted. It is found in the membrane. Its function is as follows. Has bactericidal activity. May act as a ligand for C-C chemokine receptor CCR6. Positively regulates the sperm motility and bactericidal activity in a CCR6-dependent manner. Binds to CCR6 and triggers Ca2+ mobilization in the sperm which is important for its motility. This chain is Beta-defensin 1 (DEFB1), found in Pongo pygmaeus (Bornean orangutan).